A 449-amino-acid polypeptide reads, in one-letter code: UPF0761 membrane protein Cpha266_1653 (449 aa).

6 helical membrane-spanning segments follow: residues 77–97, 133–153, 173–193, 214–234, 244–264, and 277–297; these read LLSL…FPVF, SVPL…ISTI, FTLY…SLVA, LLSF…YMLV, AVYG…WFVF, and GALS…VVVL.

This sequence belongs to the UPF0761 family.

It localises to the cell inner membrane. This Chlorobium phaeobacteroides (strain DSM 266 / SMG 266 / 2430) protein is UPF0761 membrane protein Cpha266_1653.